Consider the following 223-residue polypeptide: Protein BTG4 (223 aa).

It belongs to the BTG family. Interacts with CNOT7. Interacts with EIF4E. Interacts with CNOT8. Expressed in oocytes after germinal vesicle breakdown. Expressed in testis and in olfactory epithelium.

Functionally, adapter protein that bridges CNOT7, a catalytic subunit of the CCR4-NOT complex, to EIF4E. Facilitates maternal mRNAs decay during the maturation of oocytes and in the fertilized egg, and is required for the maternal-zygotic transition (MZT), zygotic cleavage and initiation of embryonic development. This is Protein BTG4 (BTG4) from Homo sapiens (Human).